The primary structure comprises 632 residues: 1-deoxy-D-xylulose-5-phosphate synthase (632 aa).

Residues H75 and 117–119 (GHA) contribute to the thiamine diphosphate site. A Mg(2+)-binding site is contributed by D146. Residues 147–148 (AA), N175, and E370 contribute to the thiamine diphosphate site. N175 contributes to the Mg(2+) binding site.

This sequence belongs to the transketolase family. DXPS subfamily. In terms of assembly, homodimer. It depends on Mg(2+) as a cofactor. Requires thiamine diphosphate as cofactor.

The enzyme catalyses D-glyceraldehyde 3-phosphate + pyruvate + H(+) = 1-deoxy-D-xylulose 5-phosphate + CO2. Its pathway is metabolic intermediate biosynthesis; 1-deoxy-D-xylulose 5-phosphate biosynthesis; 1-deoxy-D-xylulose 5-phosphate from D-glyceraldehyde 3-phosphate and pyruvate: step 1/1. Catalyzes the acyloin condensation reaction between C atoms 2 and 3 of pyruvate and glyceraldehyde 3-phosphate to yield 1-deoxy-D-xylulose-5-phosphate (DXP). The sequence is that of 1-deoxy-D-xylulose-5-phosphate synthase from Chlamydia muridarum (strain MoPn / Nigg).